Consider the following 2388-residue polypeptide: Highly reducing polyketide synthase Preu1 (2388 aa).

The 426-residue stretch at 7–432 (NDDIAIVGLA…GTNAHVILDD (426 aa)) folds into the Ketosynthase family 3 (KS3) domain. Active-site for beta-ketoacyl synthase activity residues include cysteine 180, histidine 315, and histidine 355. A malonyl-CoA:ACP transacylase (MAT) domain region spans residues 549 to 875 (GFVFTGQGAQ…SSVLMRGEDG (327 aa)). The active-site For malonyltransferase activity is serine 641. Positions 940-1074 (HDLLGAPTQD…GLGKIHYRPE (135 aa)) are N-terminal hotdog fold. The region spanning 940 to 1256 (HDLLGAPTQD…CRELPNGNSQ (317 aa)) is the PKS/mFAS DH domain. The interval 941–1251 (DLLGAPTQDS…VEGLRCRELP (311 aa)) is dehydratase (DH) domain. Residue histidine 972 is the Proton acceptor; for dehydratase activity of the active site. The segment at 1102–1256 (TASISPVDFY…CRELPNGNSQ (155 aa)) is C-terminal hotdog fold. Aspartate 1167 (proton donor; for dehydratase activity) is an active-site residue. The enoyl reductase (ER) domain stretch occupies residues 1676–1983 (KLPSDARFTS…VPTGLGKAVL (308 aa)). Residues 2007–2191 (ATYVLAGGLG…AATSVDLGLM (185 aa)) form a ketoreductase (KR) domain region. The region spanning 2303-2380 (QANGIVLEAL…ALAEKISKAS (78 aa)) is the Carrier domain. Position 2340 is an O-(pantetheine 4'-phosphoryl)serine (serine 2340).

The cofactor is pantetheine 4'-phosphate.

In terms of biological role, highly reducing polyketide synthase; part of a gene cluster that mediates the biosynthesis of a yet unidentified natural product. This chain is Highly reducing polyketide synthase Preu1, found in Preussia isomera (Coprophilous fungus).